Here is a 556-residue protein sequence, read N- to C-terminus: Urocanate hydratase (556 aa).

NAD(+) contacts are provided by residues Gly-52–Gly-53, Gln-130, Gly-176–Gly-178, Glu-196, Arg-201, Asn-242–Ala-243, Gln-263–His-267, Tyr-273–Leu-274, and Tyr-322. Residue Cys-410 is part of the active site. Gly-492 contributes to the NAD(+) binding site.

This sequence belongs to the urocanase family. NAD(+) is required as a cofactor.

Its subcellular location is the cytoplasm. The catalysed reaction is 4-imidazolone-5-propanoate = trans-urocanate + H2O. It functions in the pathway amino-acid degradation; L-histidine degradation into L-glutamate; N-formimidoyl-L-glutamate from L-histidine: step 2/3. Its function is as follows. Catalyzes the conversion of urocanate to 4-imidazolone-5-propionate. In Shewanella sediminis (strain HAW-EB3), this protein is Urocanate hydratase.